We begin with the raw amino-acid sequence, 176 residues long: Dynein light chain Tctex-type 5-B (176 aa).

It belongs to the dynein light chain Tctex-type family.

The sequence is that of Dynein light chain Tctex-type 5-B (Dynlt5-b) from Xenopus laevis (African clawed frog).